A 317-amino-acid polypeptide reads, in one-letter code: UDP-3-O-acylglucosamine N-acyltransferase (317 aa).

Histidine 229 serves as the catalytic Proton acceptor.

Belongs to the transferase hexapeptide repeat family. LpxD subfamily. In terms of assembly, homotrimer.

It catalyses the reaction a UDP-3-O-[(3R)-3-hydroxyacyl]-alpha-D-glucosamine + a (3R)-hydroxyacyl-[ACP] = a UDP-2-N,3-O-bis[(3R)-3-hydroxyacyl]-alpha-D-glucosamine + holo-[ACP] + H(+). It functions in the pathway bacterial outer membrane biogenesis; LPS lipid A biosynthesis. Functionally, catalyzes the N-acylation of UDP-3-O-acylglucosamine using 3-hydroxyacyl-ACP as the acyl donor. Is involved in the biosynthesis of lipid A, a phosphorylated glycolipid that anchors the lipopolysaccharide to the outer membrane of the cell. The sequence is that of UDP-3-O-acylglucosamine N-acyltransferase from Campylobacter concisus (strain 13826).